The primary structure comprises 935 residues: C-1-tetrahydrofolate synthase, cytoplasmic (935 aa).

N-acetylmethionine is present on M1. Residues A2–A291 are methylenetetrahydrofolate dehydrogenase and methenyltetrahydrofolate cyclohydrolase (D/C) domain. Residues Y52–K56 and V99–L101 each bind substrate. K56 is an active-site residue. NADP(+) contacts are provided by residues G172–S174 and S197. P272–G276 contacts substrate. Residues L310–F935 form a formyltetrahydrofolate synthetase domain region. Residue S318 is modified to Phosphoserine. Residue T380–S387 coordinates ATP. 2 positions are modified to phosphoserine: S413 and S490.

The protein in the N-terminal section; belongs to the tetrahydrofolate dehydrogenase/cyclohydrolase family. It in the C-terminal section; belongs to the formate--tetrahydrofolate ligase family. In terms of assembly, homodimer.

The protein resides in the cytoplasm. It carries out the reaction (6R)-5,10-methylene-5,6,7,8-tetrahydrofolate + NADP(+) = (6R)-5,10-methenyltetrahydrofolate + NADPH. It catalyses the reaction (6R)-5,10-methenyltetrahydrofolate + H2O = (6R)-10-formyltetrahydrofolate + H(+). The catalysed reaction is (6S)-5,6,7,8-tetrahydrofolate + formate + ATP = (6R)-10-formyltetrahydrofolate + ADP + phosphate. It functions in the pathway one-carbon metabolism; tetrahydrofolate interconversion. Functionally, trifunctional enzyme that catalyzes the interconversion of three forms of one-carbon-substituted tetrahydrofolate: (6R)-5,10-methylene-5,6,7,8-tetrahydrofolate, 5,10-methenyltetrahydrofolate and (6S)-10-formyltetrahydrofolate. These derivatives of tetrahydrofolate are differentially required in nucleotide and amino acid biosynthesis, (6S)-10-formyltetrahydrofolate being required for purine biosynthesis while (6R)-5,10-methylene-5,6,7,8-tetrahydrofolate is used for serine and methionine biosynthesis for instance. The protein is C-1-tetrahydrofolate synthase, cytoplasmic (MTHFD1) of Pongo abelii (Sumatran orangutan).